The sequence spans 33 residues: Large ribosomal subunit protein eL28 (33 aa).

The protein belongs to the eukaryotic ribosomal protein eL28 family. As to quaternary structure, component of the large ribosomal subunit.

It is found in the cytoplasm. Functionally, component of the large ribosomal subunit. The ribosome is a large ribonucleoprotein complex responsible for the synthesis of proteins in the cell. The sequence is that of Large ribosomal subunit protein eL28 (rpl28) from Xenopus laevis (African clawed frog).